We begin with the raw amino-acid sequence, 1026 residues long: Vacuolar protein sorting-associated protein 18 homolog (1026 aa).

Residues 858–896 (IVDFLKRNKQRLEKLERSMKEATEIASEIRDKQEKLKNR) adopt a coiled-coil conformation. An RING-type; degenerate zinc finger spans residues 906–932 (CSHCARPISGRAFNVHSCRHFFHRECL).

As to quaternary structure, probable core component of at least two putative endosomal tethering complexes, the homotypic fusion and vacuole protein sorting (HOPS) complex and the class C core vacuole/endosome tethering (CORVET) complex. Their common core is composed of the class C Vps proteins vps-11, vps-16 and vps-18, which in HOPS further associates with vps-33.1, vps-39 and vps-41 and in CORVET with vps-8 and vps-33.2. In hermaphrodites, expressed in coelomocytes and gonadal sheath cells.

The protein localises to the cytoplasm. The protein resides in the late endosome membrane. It localises to the lysosome membrane. It is found in the early endosome. Its subcellular location is the cytoplasmic vesicle. The protein localises to the autophagosome. The protein resides in the clathrin-coated vesicle. Plays a role in vesicle-mediated protein trafficking to lysosomal compartments including the endocytic membrane transport and autophagic pathways. Believed to act as a core component of the putative HOPS and CORVET endosomal tethering complexes which are proposed to be involved in the rab-5-to-rab-7 endosome conversion probably implicating sand-1, and via binding SNAREs and SNARE complexes to mediate tethering and docking events during SNARE-mediated membrane fusion. The HOPS complex is proposed to be recruited to rab-7 on the late endosomal membrane and to regulate late endocytic, phagocytic and autophagic traffic towards lysosomes. Within the HOPS complex, contributes to the normal development of gut granules in intestinal cells of the embryo, and also promotes the trafficking of embryonic intestinal gut granules away from lysosomes. The CORVET complex is proposed to function as a rab-5 effector to mediate early endosome fusion probably in specific endosome subpopulations. Required for fusion of endosomes and autophagosomes with lysosomes. Plays a role in the degradation of apoptotic cells during programmed cell death. This is Vacuolar protein sorting-associated protein 18 homolog from Caenorhabditis elegans.